We begin with the raw amino-acid sequence, 260 residues long: Acetylglutamate kinase (260 aa).

Residues 46–47 (GG), arginine 68, and asparagine 160 contribute to the substrate site.

The protein belongs to the acetylglutamate kinase family. ArgB subfamily.

The protein localises to the cytoplasm. It carries out the reaction N-acetyl-L-glutamate + ATP = N-acetyl-L-glutamyl 5-phosphate + ADP. The protein operates within amino-acid biosynthesis; L-arginine biosynthesis; N(2)-acetyl-L-ornithine from L-glutamate: step 2/4. In terms of biological role, catalyzes the ATP-dependent phosphorylation of N-acetyl-L-glutamate. The protein is Acetylglutamate kinase of Shewanella baltica (strain OS223).